The primary structure comprises 301 residues: Pyridoxal 5'-phosphate synthase subunit PdxS (301 aa).

Residue D31 coordinates D-ribose 5-phosphate. The active-site Schiff-base intermediate with D-ribose 5-phosphate is K88. Residue G160 coordinates D-ribose 5-phosphate. Position 172 (K172) interacts with D-glyceraldehyde 3-phosphate. D-ribose 5-phosphate-binding positions include G221 and 242-243 (GS).

Belongs to the PdxS/SNZ family. In the presence of PdxT, forms a dodecamer of heterodimers.

The catalysed reaction is aldehydo-D-ribose 5-phosphate + D-glyceraldehyde 3-phosphate + L-glutamine = pyridoxal 5'-phosphate + L-glutamate + phosphate + 3 H2O + H(+). Its pathway is cofactor biosynthesis; pyridoxal 5'-phosphate biosynthesis. Catalyzes the formation of pyridoxal 5'-phosphate from ribose 5-phosphate (RBP), glyceraldehyde 3-phosphate (G3P) and ammonia. The ammonia is provided by the PdxT subunit. Can also use ribulose 5-phosphate and dihydroxyacetone phosphate as substrates, resulting from enzyme-catalyzed isomerization of RBP and G3P, respectively. The chain is Pyridoxal 5'-phosphate synthase subunit PdxS from Methanosarcina mazei (strain ATCC BAA-159 / DSM 3647 / Goe1 / Go1 / JCM 11833 / OCM 88) (Methanosarcina frisia).